The chain runs to 461 residues: Probable Xaa-Pro aminopeptidase PEPP (461 aa).

Residues aspartate 257, aspartate 268, glutamate 391, and glutamate 431 each contribute to the Mn(2+) site.

This sequence belongs to the peptidase M24B family. Mn(2+) serves as cofactor.

It carries out the reaction Release of any N-terminal amino acid, including proline, that is linked to proline, even from a dipeptide or tripeptide.. Its function is as follows. Catalyzes the removal of a penultimate prolyl residue from the N-termini of peptides. The polypeptide is Probable Xaa-Pro aminopeptidase PEPP (PEPP) (Colletotrichum graminicola (strain M1.001 / M2 / FGSC 10212) (Maize anthracnose fungus)).